A 147-amino-acid chain; its full sequence is Histone H2B (147 aa).

Residues 1-31 (MAPKAEKKPAEKKPAEEKKAVAEKAPAEKKP) show a composition bias toward basic and acidic residues. The disordered stretch occupies residues 1–55 (MAPKAEKKPAEKKPAEEKKAVAEKAPAEKKPKAGKKLPKEGGAAAGDKKKKRVKK). Residues Lys7, Lys35, and Lys36 each carry the N6-acetyllysine modification. Lys143 participates in a covalent cross-link: Glycyl lysine isopeptide (Lys-Gly) (interchain with G-Cter in ubiquitin).

The protein belongs to the histone H2B family. As to quaternary structure, the nucleosome is a histone octamer containing two molecules each of H2A, H2B, H3 and H4 assembled in one H3-H4 heterotetramer and two H2A-H2B heterodimers. The octamer wraps approximately 147 bp of DNA. Post-translationally, can be acetylated to form H2BK6ac, H2BK33ac and H2BK34ac. Monoubiquitinated to form H2BK143ub1; may give a specific tag for epigenetic transcriptional activation.

The protein localises to the nucleus. It localises to the chromosome. Functionally, core component of nucleosome. Nucleosomes wrap and compact DNA into chromatin, limiting DNA accessibility to the cellular machineries which require DNA as a template. Histones thereby play a central role in transcription regulation, DNA repair, DNA replication and chromosomal stability. DNA accessibility is regulated via a complex set of post-translational modifications of histones, also called histone code, and nucleosome remodeling. In Gossypium hirsutum (Upland cotton), this protein is Histone H2B (HIS2B).